The primary structure comprises 424 residues: Enolase (424 aa).

Glutamine 162 contacts (2R)-2-phosphoglycerate. Glutamate 204 (proton donor) is an active-site residue. Residues aspartate 241, glutamate 284, and aspartate 311 each coordinate Mg(2+). 4 residues coordinate (2R)-2-phosphoglycerate: lysine 336, arginine 365, serine 366, and lysine 387. Lysine 336 acts as the Proton acceptor in catalysis.

Belongs to the enolase family. Requires Mg(2+) as cofactor.

The protein resides in the cytoplasm. It is found in the secreted. Its subcellular location is the cell surface. The enzyme catalyses (2R)-2-phosphoglycerate = phosphoenolpyruvate + H2O. Its pathway is carbohydrate degradation; glycolysis; pyruvate from D-glyceraldehyde 3-phosphate: step 4/5. Catalyzes the reversible conversion of 2-phosphoglycerate (2-PG) into phosphoenolpyruvate (PEP). It is essential for the degradation of carbohydrates via glycolysis. This Rhizobium meliloti (strain 1021) (Ensifer meliloti) protein is Enolase.